A 159-amino-acid chain; its full sequence is Small ribosomal subunit protein uS4 (159 aa).

The 53-residue stretch at 106–158 folds into the S4 RNA-binding domain; it reads RRLQTIVYRMGLAKSIHHARQLIVHGHVAVAGRRVTSPGFLVPRELEDKISLI.

It belongs to the universal ribosomal protein uS4 family. Part of the 30S ribosomal subunit. Contacts protein S5. The interaction surface between S4 and S5 is involved in control of translational fidelity.

Functionally, one of the primary rRNA binding proteins, it binds directly to 16S rRNA where it nucleates assembly of the body of the 30S subunit. With S5 and S12 plays an important role in translational accuracy. The chain is Small ribosomal subunit protein uS4 from Pyrobaculum aerophilum (strain ATCC 51768 / DSM 7523 / JCM 9630 / CIP 104966 / NBRC 100827 / IM2).